The sequence spans 410 residues: LL-diaminopimelate aminotransferase (410 aa).

2 residues coordinate substrate: Tyr-15 and Gly-42. Pyridoxal 5'-phosphate contacts are provided by residues Tyr-72, 108–109, Tyr-132, Asn-187, Tyr-218, and 246–248; these read SK and SFS. 3 residues coordinate substrate: Lys-109, Tyr-132, and Asn-187. At Lys-249 the chain carries N6-(pyridoxal phosphate)lysine. Arg-257 and Asn-292 together coordinate pyridoxal 5'-phosphate. Asn-292 and Arg-388 together coordinate substrate.

Belongs to the class-I pyridoxal-phosphate-dependent aminotransferase family. LL-diaminopimelate aminotransferase subfamily. As to quaternary structure, homodimer. Pyridoxal 5'-phosphate is required as a cofactor.

The enzyme catalyses (2S,6S)-2,6-diaminopimelate + 2-oxoglutarate = (S)-2,3,4,5-tetrahydrodipicolinate + L-glutamate + H2O + H(+). Its pathway is amino-acid biosynthesis; L-lysine biosynthesis via DAP pathway; LL-2,6-diaminopimelate from (S)-tetrahydrodipicolinate (aminotransferase route): step 1/1. In terms of biological role, involved in the synthesis of meso-diaminopimelate (m-DAP or DL-DAP), required for both lysine and peptidoglycan biosynthesis. Catalyzes the direct conversion of tetrahydrodipicolinate to LL-diaminopimelate. The polypeptide is LL-diaminopimelate aminotransferase (Geotalea daltonii (strain DSM 22248 / JCM 15807 / FRC-32) (Geobacter daltonii)).